We begin with the raw amino-acid sequence, 180 residues long: Putative 3-methyladenine DNA glycosylase (180 aa).

Belongs to the DNA glycosylase MPG family.

This chain is Putative 3-methyladenine DNA glycosylase, found in Wolbachia pipientis wMel.